A 91-amino-acid polypeptide reads, in one-letter code: Defensin-like protein 82 (91 aa).

A signal peptide spans 1–27 (MAIKKFSSLLLPLLMVLALVVLPIISG). 4 disulfides stabilise this stretch: cysteine 34–cysteine 72, cysteine 41–cysteine 62, cysteine 47–cysteine 70, and cysteine 51–cysteine 71.

Belongs to the DEFL family.

It localises to the secreted. This Arabidopsis thaliana (Mouse-ear cress) protein is Defensin-like protein 82.